The primary structure comprises 133 residues: Small ribosomal subunit protein uS11 (133 aa).

Belongs to the universal ribosomal protein uS11 family. As to quaternary structure, part of the 30S ribosomal subunit. Interacts with proteins S7 and S18. Binds to IF-3.

Located on the platform of the 30S subunit, it bridges several disparate RNA helices of the 16S rRNA. Forms part of the Shine-Dalgarno cleft in the 70S ribosome. This chain is Small ribosomal subunit protein uS11, found in Burkholderia pseudomallei (strain 1106a).